The sequence spans 176 residues: Large ribosomal subunit protein uL6 (176 aa).

The protein belongs to the universal ribosomal protein uL6 family. As to quaternary structure, part of the 50S ribosomal subunit.

Functionally, this protein binds to the 23S rRNA, and is important in its secondary structure. It is located near the subunit interface in the base of the L7/L12 stalk, and near the tRNA binding site of the peptidyltransferase center. The protein is Large ribosomal subunit protein uL6 of Thiobacillus denitrificans (strain ATCC 25259 / T1).